Here is a 154-residue protein sequence, read N- to C-terminus: Myoglobin (154 aa).

The region spanning valine 2–lysine 148 is the Globin domain. Histidine 65 serves as a coordination point for nitrite. Histidine 65 contacts O2. Threonine 68 bears the Phosphothreonine mark. Heme b is bound at residue histidine 94.

This sequence belongs to the globin family. In terms of assembly, monomeric.

The protein resides in the cytoplasm. It is found in the sarcoplasm. The enzyme catalyses Fe(III)-heme b-[protein] + nitric oxide + H2O = Fe(II)-heme b-[protein] + nitrite + 2 H(+). It carries out the reaction H2O2 + AH2 = A + 2 H2O. Functionally, monomeric heme protein which primary function is to store oxygen and facilitate its diffusion within muscle tissues. Reversibly binds oxygen through a pentacoordinated heme iron and enables its timely and efficient release as needed during periods of heightened demand. Depending on the oxidative conditions of tissues and cells, and in addition to its ability to bind oxygen, it also has a nitrite reductase activity whereby it regulates the production of bioactive nitric oxide. Under stress conditions, like hypoxia and anoxia, it also protects cells against reactive oxygen species thanks to its pseudoperoxidase activity. The protein is Myoglobin (MB) of Balaenoptera physalus (Fin whale).